The sequence spans 193 residues: NADH-quinone oxidoreductase subunit B (193 aa).

Residues Cys-72, Cys-73, Cys-137, and Cys-167 each coordinate [4Fe-4S] cluster.

The protein belongs to the complex I 20 kDa subunit family. As to quaternary structure, NDH-1 is composed of 14 different subunits. Subunits NuoB, C, D, E, F, and G constitute the peripheral sector of the complex. The cofactor is [4Fe-4S] cluster.

The protein localises to the cell inner membrane. It carries out the reaction a quinone + NADH + 5 H(+)(in) = a quinol + NAD(+) + 4 H(+)(out). Its function is as follows. NDH-1 shuttles electrons from NADH, via FMN and iron-sulfur (Fe-S) centers, to quinones in the respiratory chain. The immediate electron acceptor for the enzyme in this species is believed to be ubiquinone. Couples the redox reaction to proton translocation (for every two electrons transferred, four hydrogen ions are translocated across the cytoplasmic membrane), and thus conserves the redox energy in a proton gradient. The protein is NADH-quinone oxidoreductase subunit B of Bartonella quintana (strain Toulouse) (Rochalimaea quintana).